Here is a 543-residue protein sequence, read N- to C-terminus: Cobyric acid synthase (543 aa).

One can recognise a GATase cobBQ-type domain in the interval methionine 260 to phenylalanine 483. Cysteine 346 acts as the Nucleophile in catalysis. Histidine 475 is a catalytic residue.

This sequence belongs to the CobB/CobQ family. CobQ subfamily.

Its pathway is cofactor biosynthesis; adenosylcobalamin biosynthesis. Functionally, catalyzes amidations at positions B, D, E, and G on adenosylcobyrinic A,C-diamide. NH(2) groups are provided by glutamine, and one molecule of ATP is hydrogenolyzed for each amidation. The sequence is that of Cobyric acid synthase from Nitratidesulfovibrio vulgaris (strain ATCC 29579 / DSM 644 / CCUG 34227 / NCIMB 8303 / VKM B-1760 / Hildenborough) (Desulfovibrio vulgaris).